The primary structure comprises 317 residues: Small glutamine-rich tetratricopeptide repeat-containing protein 2 (317 aa).

TPR repeat units lie at residues 14 to 48, 83 to 116, 118 to 150, and 151 to 184; these read LKQA…KPEE, AEKL…DPTS, VYYS…DPHH, and ARAF…DPNN. Positions 198–215 are enriched in polar residues; it reads LNQPSDSSATSGADQART. Disordered stretches follow at residues 198-224 and 298-317; these read LNQP…PDLG and MNNN…PPPQ.

Belongs to the SGT family.

It is found in the cytoplasm. It localises to the nucleus. In terms of biological role, co-chaperone that binds to the molecular chaperone Hsp70 and regulates Hsp70 ATPase activity. In Schizosaccharomyces pombe (strain 972 / ATCC 24843) (Fission yeast), this protein is Small glutamine-rich tetratricopeptide repeat-containing protein 2 (sgt2).